The sequence spans 1074 residues: Probable arabinosyltransferase C (1074 aa).

A run of 10 helical transmembrane segments spans residues 15 to 37 (ARLV…PLLP), 214 to 236 (LLKL…ALHV), 251 to 273 (SRWW…WHFV), 415 to 437 (IIIG…ALLV), 452 to 474 (RFGY…FLIF), 516 to 538 (SVAR…AMTL), 573 to 595 (THQF…VAVT), 608 to 630 (FGAA…WYVS), 645 to 667 (FGFT…WFHF), and 684 to 706 (LLVA…SLTL).

Belongs to the emb family.

Its subcellular location is the cell membrane. Arabinosyl transferase responsible for the polymerization of arabinose into the arabinan of arabinogalactan. This Mycolicibacterium smegmatis (Mycobacterium smegmatis) protein is Probable arabinosyltransferase C (embC).